Consider the following 242-residue polypeptide: NH(3)-dependent NAD(+) synthetase (242 aa).

27-34 (GISGGIDS) provides a ligand contact to ATP. D33 contributes to the Mg(2+) binding site. R109 serves as a coordination point for deamido-NAD(+). Residue T129 participates in ATP binding. A Mg(2+)-binding site is contributed by E134. 2 residues coordinate deamido-NAD(+): K142 and D149. K158 and T180 together coordinate ATP. 231 to 232 (HK) provides a ligand contact to deamido-NAD(+).

It belongs to the NAD synthetase family. Homodimer.

The catalysed reaction is deamido-NAD(+) + NH4(+) + ATP = AMP + diphosphate + NAD(+) + H(+). Its pathway is cofactor biosynthesis; NAD(+) biosynthesis; NAD(+) from deamido-NAD(+) (ammonia route): step 1/1. Catalyzes the ATP-dependent amidation of deamido-NAD to form NAD. Uses ammonia as a nitrogen source. This Thermoplasma volcanium (strain ATCC 51530 / DSM 4299 / JCM 9571 / NBRC 15438 / GSS1) protein is NH(3)-dependent NAD(+) synthetase.